We begin with the raw amino-acid sequence, 152 residues long: MTDAFDRLKKRSRTPIAREGSLTTGPELSDRPLQLLPREFETFCDRYAVHAGDVIEAALDLVLLDPDLQQRLLQRLRQGNGSDRVWLGTACPRSWQQQLQQQAQDQGLSEADLLQEAIAQRLDLVLGQTTLREEVTLLRQELDQLKRKLHGW.

As to quaternary structure, self-associates, interacts with McdA probably via the C-terminus of both proteins. Homohexamerizes. Probably a trimer of dimers. Interacts with most of the shell components of the carboxysome (CcmK2, CcmK3, CcmK4, CcmL and CcmO, but not CcmP) via its C-terminus.

The protein localises to the carboxysome. McdA and McdB together mediate carboxysome (Cb) spacing, size, ultrastructure and probably inheritance in the cell. Together they prevent Cb aggregation. McdA is an ATPase that forms dynamic gradients on the nucleoid in response to adapter protein McdB, which associates with carboxysomes. The interplay between McdA gradients on the nucleoid and McdB-bound carboxysomes result in the equal spacing of Cbs along the cell length. McdB may have an additional function in cell divison. Stimulates the ATPase activity of McdA, causing McdA to be released from DNA. Overexpression leads to loss of McdA oscillation and formation of large Cb aggregates which colocalize with McdB, as well as diffuse McdB staining in the cytoplasm. Undergoes liquid-liquid phase separation between pH 6.5-7.5 and at concentrations between 1 uM and 167 uM. Forms polar foci upon overexpression in E.coli. Functionally, incorrect positioning (aggregation) of carboxysomes results in reduced CO(2) fixation by encapsulated RuBisCO, which leads to slower growth, cell elongation, asymmetric cell division and an increase in RuBisCO levels. In Synechococcus elongatus (strain ATCC 33912 / PCC 7942 / FACHB-805) (Anacystis nidulans R2), this protein is Maintenance of carboxysome distribution protein B.